A 389-amino-acid chain; its full sequence is Chitinase-3-like protein 1 (389 aa).

A signal peptide spans 1 to 29; sequence MHTSTEARMGMRAALTGFAVLMLLQSCSA. Positions 30–389 constitute a GH18 domain; that stretch reads YKLVCYFTSW…LTNAIKDALA (360 aa). Residues Cys-34 and Cys-59 are joined by a disulfide bond. N-linked (GlcNAc...) asparagine glycosylation occurs at Asn-68. Chitin-binding positions include 79–80, 106–109, Tyr-150, and 213–216; these read EW, GGWK, and MTYD. Cys-309 and Cys-372 are joined by a disulfide. Residues 333–347 form an important for AKT1 activation and IL8 production region; sequence QWVGYEDKESVKNKV. Trp-361 lines the chitin pocket.

Belongs to the glycosyl hydrolase 18 family. In terms of assembly, monomer. Detected in lung in pulmonary macrophages and alveolar type 2 cells and in bronchoalveolar lavage (BAL) fluids. Expressed in mammary tumor cells (at protein level). Expressed in lung. Not detected in non-inflammatory colon.

It localises to the secreted. It is found in the extracellular space. The protein resides in the cytoplasm. The protein localises to the endoplasmic reticulum. Functionally, carbohydrate-binding lectin with a preference for chitin. Has no chitinase activity. May play a role in tissue remodeling and in the capacity of cells to respond to and cope with changes in their environment. Plays a role in T-helper cell type 2 (Th2) inflammatory response and IL-13-induced inflammation, regulating allergen sensitization, inflammatory cell apoptosis, dendritic cell accumulation and M2 macrophage differentiation. Facilitates invasion of pathogenic enteric bacteria into colonic mucosa and lymphoid organs. Mediates activation of AKT1 signaling pathway and subsequent IL8 production in colonic epithelial cells. Regulates antibacterial responses in lung by contributing to macrophage bacterial killing, controlling bacterial dissemination and augmenting host tolerance. Also regulates hyperoxia-induced injury, inflammation and epithelial apoptosis in lung. The sequence is that of Chitinase-3-like protein 1 (Chi3l1) from Mus musculus (Mouse).